We begin with the raw amino-acid sequence, 55 residues long: Protein CADMIUM TOLERANCE 1 (55 aa).

A helical membrane pass occupies residues 24 to 40 (GCLYACIFTALCCFCCY).

Belongs to the CYSTM1 family. As to expression, expressed in roots and shoots.

Its subcellular location is the cell membrane. It is found in the secreted. It localises to the cell wall. Its function is as follows. Confers resistance to heavy metal ions (e.g. cadmium (CdCl(2)) and copper (CuCl(2))) by chelating them at the plasma membrane of root cells, thus stopping their entry and reducing their accumulation. Binds to aluminium (Al). The sequence is that of Protein CADMIUM TOLERANCE 1 from Oryza sativa subsp. japonica (Rice).